A 447-amino-acid chain; its full sequence is Tubulin beta-4 chain (447 aa).

Residues Gln-11, Glu-71, Ser-140, Gly-144, Thr-145, Gly-146, Asn-206, and Asn-228 each contribute to the GTP site. Glu-71 is a binding site for Mg(2+). The interval 428-447 (QDATAEEYEEEEHDGEEEHA) is disordered. The span at 431 to 447 (TAEEYEEEEHDGEEEHA) shows a compositional bias: acidic residues.

It belongs to the tubulin family. Dimer of alpha and beta chains. A typical microtubule is a hollow water-filled tube with an outer diameter of 25 nm and an inner diameter of 15 nM. Alpha-beta heterodimers associate head-to-tail to form protofilaments running lengthwise along the microtubule wall with the beta-tubulin subunit facing the microtubule plus end conferring a structural polarity. Microtubules usually have 13 protofilaments but different protofilament numbers can be found in some organisms and specialized cells. The cofactor is Mg(2+).

Its subcellular location is the cytoplasm. It localises to the cytoskeleton. Its function is as follows. Tubulin is the major constituent of microtubules, a cylinder consisting of laterally associated linear protofilaments composed of alpha- and beta-tubulin heterodimers. Microtubules grow by the addition of GTP-tubulin dimers to the microtubule end, where a stabilizing cap forms. Below the cap, tubulin dimers are in GDP-bound state, owing to GTPase activity of alpha-tubulin. This chain is Tubulin beta-4 chain (TUBB4), found in Zea mays (Maize).